Consider the following 190-residue polypeptide: Potassium-transporting ATPase KdpC subunit (190 aa).

The chain crosses the membrane as a helical span at residues 13 to 33 (VGFLLLTLMCGVVYPGIVTIF).

This sequence belongs to the KdpC family. The system is composed of three essential subunits: KdpA, KdpB and KdpC.

It is found in the cell membrane. Its function is as follows. Part of the high-affinity ATP-driven potassium transport (or Kdp) system, which catalyzes the hydrolysis of ATP coupled with the electrogenic transport of potassium into the cytoplasm. This subunit acts as a catalytic chaperone that increases the ATP-binding affinity of the ATP-hydrolyzing subunit KdpB by the formation of a transient KdpB/KdpC/ATP ternary complex. This chain is Potassium-transporting ATPase KdpC subunit, found in Listeria monocytogenes serotype 4a (strain HCC23).